The following is a 941-amino-acid chain: PHD finger protein 14 (941 aa).

The tract at residues 22–295 is disordered; it reads DYDSSDDSDF…LSQSKSNEDS (274 aa). A phosphoserine mark is found at Ser26 and Ser29. Positions 36-47 are enriched in low complexity; that stretch reads ASDSEGSGNGSE. Residues 60–72 show a composition bias toward acidic residues; it reads DSEENILEEELNE. 3 stretches are compositionally biased toward basic and acidic residues: residues 74–85, 94–109, and 116–132; these read IQVKEEQLKNST, QLIK…NGER, and KEKE…EKAT. Phosphoserine is present on Ser84. A compositionally biased stretch (low complexity) spans 133–166; sequence VSDSAAASAAGTTPATSPPAVTSPSVPTTTTTTT. A Phosphoserine modification is found at Ser189. 2 stretches are compositionally biased toward acidic residues: residues 194–205 and 226–249; these read NAMDDYDSEDDN and DGDN…EGND. Tyr199 is subject to Phosphotyrosine. Position 201 is a phosphoserine (Ser201). Residue Thr280 is modified to Phosphothreonine. Positions 281-290 are enriched in polar residues; that stretch reads NDSLTLSQSK. A phosphoserine mark is found at Ser283, Ser287, Ser291, Ser295, and Ser301. Residues 312 to 373 form a PHD-type 1 zinc finger; it reads ILICCVCLGD…PWFCDACKCG (62 aa). Zn(2+) is bound by residues Cys315, Cys318, Cys332, Cys335, His340, and Cys343. Residue Ser352 is modified to Phosphoserine. Residues Cys367, Cys370, Cys378, Cys381, His398, Cys401, Cys434, Cys437, Cys451, Cys456, His461, Cys464, Cys488, and His491 each contribute to the Zn(2+) site. A C2HC pre-PHD-type zinc finger spans residues 375 to 408; sequence SPSCELCPNQDGIFKETDAGRWVHIVCALYVPGV. The segment at 432–492 adopts a PHD-type 2 zinc-finger fold; that stretch reads KECSFCEDPR…PFFAYCKQHA (61 aa). Phosphoserine is present on Ser523. Positions 623 to 671 form a coiled coil; the sequence is MIQIQENMAEQKNIKDKLENEQEKLHVEYNKLCESLEELQNLNGKLRSE. Residues 718–772 form a PHD-type 3 zinc finger; sequence LYSCGICKKNHDQHLLLLCDTCKLHYHLGCLDPPLTRMPRKTKNSYWQCSECDQA. 8 residues coordinate Zn(2+): Cys721, Cys724, Cys736, Cys739, His744, Cys747, Cys766, and Cys769. Phosphoserine occurs at positions 774, 775, and 828. Residues 804–855 form a disordered region; sequence VPQDVPPEPKKIPIRNTRTRGRKRSFVPEEEKHEERVPRERRQRQSVLQKKP. Over residues 829–843 the composition is skewed to basic and acidic residues; the sequence is FVPEEEKHEERVPRE. The PHD-type 4 zinc-finger motif lies at 861–914; the sequence is RTECSTCKGTGDNENLVRCDECRLCYHFGCLDPPLKKSPKQTGYGWICQECDSS. 8 residues coordinate Zn(2+): Cys864, Cys867, Cys879, Cys882, His887, Cys890, Cys908, and Cys911. The tract at residues 912-941 is disordered; that stretch reads DSSSSKEDENEAEKKNASQELSMEQKTPKK. Residues 915 to 928 show a composition bias toward basic and acidic residues; sequence SSKEDENEAEKKNA. The segment covering 930 to 941 has biased composition (polar residues); the sequence is QELSMEQKTPKK.

High levels detected in testis, lung and spleen and low levels in muscle, heart, intestine and kidney (at protein level). Widely expressed in adult with increased levels in intestine, colon and lung.

It localises to the nucleus. Its subcellular location is the chromosome. The protein localises to the cytoplasm. Histone-binding protein. Binds preferentially to unmodified histone H3 but can also bind to a lesser extent to histone H3 trimethylated at 'Lys-9' (H3K9me3) as well as to histone H3 monomethylated at 'Lys-27' (H3K27ac) and trimethylated at 'Lys-27' (H3K27me3). Represses PDGFRA expression, thus playing a role in regulation of mesenchymal cell proliferation. Suppresses the expression of CDKN1A/p21 by reducing the level of trimethylation of histone H3 'Lys-4', leading to enhanced proliferation of germinal center B cells. This chain is PHD finger protein 14 (Phf14), found in Mus musculus (Mouse).